Reading from the N-terminus, the 208-residue chain is Uracil phosphoribosyltransferase (208 aa).

5-phospho-alpha-D-ribose 1-diphosphate-binding positions include Arg78, Arg103, and 130-138 (DPMLATGGS). Residues Ile193 and 198-200 (GDA) each bind uracil. Residue Asp199 coordinates 5-phospho-alpha-D-ribose 1-diphosphate.

Belongs to the UPRTase family. It depends on Mg(2+) as a cofactor.

The enzyme catalyses UMP + diphosphate = 5-phospho-alpha-D-ribose 1-diphosphate + uracil. Its pathway is pyrimidine metabolism; UMP biosynthesis via salvage pathway; UMP from uracil: step 1/1. Allosterically activated by GTP. Catalyzes the conversion of uracil and 5-phospho-alpha-D-ribose 1-diphosphate (PRPP) to UMP and diphosphate. This is Uracil phosphoribosyltransferase from Klebsiella pneumoniae (strain 342).